The chain runs to 375 residues: Putative F-box protein At5g52620 (375 aa).

The 48-residue stretch at 5–52 (GKSDPIPIDIILDILSRLSTNSIAKFGLASKFCGSILRGQDFIELFLI) folds into the F-box domain.

The polypeptide is Putative F-box protein At5g52620 (Arabidopsis thaliana (Mouse-ear cress)).